The chain runs to 51 residues: Protein 1.4 (51 aa).

Residues 1–23 form the signal peptide; the sequence is MFKKVGKFLAALAAILTLAYILA. The chain crosses the membrane as a helical span at residues 28–48; the sequence is VALVVVGACYLAAVCACVWSI.

The protein resides in the host membrane. In Escherichia coli (Bacteriophage T7), this protein is Protein 1.4.